The chain runs to 727 residues: DNA topoisomerase 3 (727 aa).

Positions 3-136 (KTVVLAEKPS…IKRLWISSVT (134 aa)) constitute a Toprim domain. Mg(2+) is bound by residues Glu9 and Asp105. The Topo IA-type catalytic domain maps to 153-593 (YENLYHSAVA…DMKAYAHQTV (441 aa)). The segment at 187–192 (SCGRVQ) is interaction with DNA. The O-(5'-phospho-DNA)-tyrosine intermediate role is filled by Tyr310. Residues 685–699 (KRKNKDKARATKRDV) show a composition bias toward basic and acidic residues. Residues 685 to 714 (KRKNKDKARATKRDVSSYMKKQNKDEPINN) form a disordered region.

It belongs to the type IA topoisomerase family. Requires Mg(2+) as cofactor.

It carries out the reaction ATP-independent breakage of single-stranded DNA, followed by passage and rejoining.. Its function is as follows. Releases the supercoiling and torsional tension of DNA, which is introduced during the DNA replication and transcription, by transiently cleaving and rejoining one strand of the DNA duplex. Introduces a single-strand break via transesterification at a target site in duplex DNA. The scissile phosphodiester is attacked by the catalytic tyrosine of the enzyme, resulting in the formation of a DNA-(5'-phosphotyrosyl)-enzyme intermediate and the expulsion of a 3'-OH DNA strand. The free DNA strand then undergoes passage around the unbroken strand, thus removing DNA supercoils. Finally, in the religation step, the DNA 3'-OH attacks the covalent intermediate to expel the active-site tyrosine and restore the DNA phosphodiester backbone. The polypeptide is DNA topoisomerase 3 (Bacillus subtilis (strain 168)).